Reading from the N-terminus, the 247-residue chain is Cell division protein ZapD (247 aa).

It belongs to the ZapD family. As to quaternary structure, interacts with FtsZ.

It is found in the cytoplasm. In terms of biological role, cell division factor that enhances FtsZ-ring assembly. Directly interacts with FtsZ and promotes bundling of FtsZ protofilaments, with a reduction in FtsZ GTPase activity. This chain is Cell division protein ZapD, found in Salmonella arizonae (strain ATCC BAA-731 / CDC346-86 / RSK2980).